Reading from the N-terminus, the 133-residue chain is MARVKRGVTAHAKHKKVLKQAEGFYGRRKNTIRAAKAAVDRSKQYAYRDRKNRKRTFRALWIQRINAAVRAEGLTYGRFIDGLSKAGIEVDRKVLSDIAIYEAEAFSALVASAKKALEYLKDTTPNAFEGAVK.

The protein belongs to the bacterial ribosomal protein bL20 family.

Its function is as follows. Binds directly to 23S ribosomal RNA and is necessary for the in vitro assembly process of the 50S ribosomal subunit. It is not involved in the protein synthesizing functions of that subunit. The protein is Large ribosomal subunit protein bL20 of Bartonella tribocorum (strain CIP 105476 / IBS 506).